The following is an 85-amino-acid chain: ATP synthase subunit c (85 aa).

2 helical membrane passes run 20-40 (LGAG…GNIF) and 65-85 (FALT…ILFA).

This sequence belongs to the ATPase C chain family. F-type ATPases have 2 components, F(1) - the catalytic core - and F(0) - the membrane proton channel. F(1) has five subunits: alpha(3), beta(3), gamma(1), delta(1), epsilon(1). F(0) has three main subunits: a(1), b(2) and c(10-14). The alpha and beta chains form an alternating ring which encloses part of the gamma chain. F(1) is attached to F(0) by a central stalk formed by the gamma and epsilon chains, while a peripheral stalk is formed by the delta and b chains.

The protein localises to the cell inner membrane. Its function is as follows. F(1)F(0) ATP synthase produces ATP from ADP in the presence of a proton or sodium gradient. F-type ATPases consist of two structural domains, F(1) containing the extramembraneous catalytic core and F(0) containing the membrane proton channel, linked together by a central stalk and a peripheral stalk. During catalysis, ATP synthesis in the catalytic domain of F(1) is coupled via a rotary mechanism of the central stalk subunits to proton translocation. Functionally, key component of the F(0) channel; it plays a direct role in translocation across the membrane. A homomeric c-ring of between 10-14 subunits forms the central stalk rotor element with the F(1) delta and epsilon subunits. The protein is ATP synthase subunit c of Gluconobacter oxydans (strain 621H) (Gluconobacter suboxydans).